A 494-amino-acid chain; its full sequence is Glycogen synthase (494 aa).

K15 serves as a coordination point for ADP-alpha-D-glucose.

Belongs to the glycosyltransferase 1 family. Bacterial/plant glycogen synthase subfamily.

It carries out the reaction [(1-&gt;4)-alpha-D-glucosyl](n) + ADP-alpha-D-glucose = [(1-&gt;4)-alpha-D-glucosyl](n+1) + ADP + H(+). The protein operates within glycan biosynthesis; glycogen biosynthesis. Its function is as follows. Synthesizes alpha-1,4-glucan chains using ADP-glucose. The protein is Glycogen synthase of Albidiferax ferrireducens (strain ATCC BAA-621 / DSM 15236 / T118) (Rhodoferax ferrireducens).